The sequence spans 702 residues: Elongation factor G (702 aa).

In terms of domain architecture, tr-type G spans 8–290 (ERYRNIGISA…AVIEYLPAPT (283 aa)). GTP-binding positions include 17-24 (AHIDAGKT), 88-92 (DTPGH), and 142-145 (NKMD).

It belongs to the TRAFAC class translation factor GTPase superfamily. Classic translation factor GTPase family. EF-G/EF-2 subfamily.

It localises to the cytoplasm. Functionally, catalyzes the GTP-dependent ribosomal translocation step during translation elongation. During this step, the ribosome changes from the pre-translocational (PRE) to the post-translocational (POST) state as the newly formed A-site-bound peptidyl-tRNA and P-site-bound deacylated tRNA move to the P and E sites, respectively. Catalyzes the coordinated movement of the two tRNA molecules, the mRNA and conformational changes in the ribosome. This chain is Elongation factor G, found in Yersinia pseudotuberculosis serotype O:1b (strain IP 31758).